A 92-amino-acid chain; its full sequence is Alpha-defensin 25 (92 aa).

Positions 1–19 (MKTLVLLSALALLAFQVQA) are cleaved as a signal peptide. A propeptide spanning residues 20–57 (DPIQNRDEESKIDEQPGKEDQAVSVSFGDPEGSSLQEE) is cleaved from the precursor. A compositionally biased stretch (basic and acidic residues) spans 24-40 (NRDEESKIDEQPGKEDQ). Residues 24–53 (NRDEESKIDEQPGKEDQAVSVSFGDPEGSS) form a disordered region. Disulfide bonds link Cys-63-Cys-92, Cys-65-Cys-80, and Cys-70-Cys-91.

Belongs to the alpha-defensin family.

It is found in the secreted. Its function is as follows. May have microbicidal activities. This Mus musculus (Mouse) protein is Alpha-defensin 25 (Defa25).